The sequence spans 318 residues: Ethyl acetate hydrolase (318 aa).

Residues Ser165, Asp261, and His291 contribute to the active site.

It belongs to the 'GDXG' lipolytic enzyme family. In terms of assembly, monomer.

The protein localises to the cytoplasm. It catalyses the reaction ethyl acetate + H2O = ethanol + acetate + H(+). Its activity is regulated as follows. Inhibited by the serine protease inhibitor phenylmethylsulfonyl fluoride, the histidine reagent diethylpyrocarbonate and two sulfhydryl reagents, mercuric chloride and naphthol AS-D chloroacetate. Not inhibited by EDTA. Its function is as follows. Esterase that catalyzes the hydrolysis of ethyl acetate. Can also use propyl acetate and the chromogenic substrates alpha-naphthyl acetate, alpha-naphthyl propionate, alpha-naphthyl caproate and 4-nitrophenyl acetate, with a preference for short-chain aliphatic esters. Highest activity is obtained in vitro with propyl acetate, followed by ethyl acetate. In vivo, could be involved in pyoverdine biosynthesis, but its specific role and its in vivo substrate have not been identified. This Pseudomonas putida (Arthrobacter siderocapsulatus) protein is Ethyl acetate hydrolase.